A 164-amino-acid chain; its full sequence is Cyclic pyranopterin monophosphate synthase (164 aa).

Substrate-binding positions include 75 to 77 (MAH) and 112 to 113 (ME). D127 is an active-site residue.

Belongs to the MoaC family. As to quaternary structure, homohexamer; trimer of dimers.

The catalysed reaction is (8S)-3',8-cyclo-7,8-dihydroguanosine 5'-triphosphate = cyclic pyranopterin phosphate + diphosphate. Its pathway is cofactor biosynthesis; molybdopterin biosynthesis. Functionally, catalyzes the conversion of (8S)-3',8-cyclo-7,8-dihydroguanosine 5'-triphosphate to cyclic pyranopterin monophosphate (cPMP). In Desulforamulus reducens (strain ATCC BAA-1160 / DSM 100696 / MI-1) (Desulfotomaculum reducens), this protein is Cyclic pyranopterin monophosphate synthase.